The chain runs to 476 residues: MDFEAVIGLEVHAELSTNTKIYCGCTTEFGGQPNTHVCPICLGLPGSLPQLNKRVVEYGIKAGLALNCSINKVCRMDRKNYFYPDCPKNYQITQDEVPICRDGYIEIELENGEKKKIGIERIHMEEDAGKLLHTNAGTLVDYNRAGVPLIEIVSRPDIRTPEEATKYLEKLKSILSSIEVSDCKMEQGSLRCDGNISVMPKGSEKFGVRSEIKNMNSFKALEKALSYEYDRHVEAVTKGEILEQETRRWDEANSVTVLMRSKEKANDYRYFPEGDLVTLNISDEWIEEVRKTIPELPHEKAERFVNEFGIPKYDAMVLTLTMDMAKFFEETALKSEDAKVASNWLMGDISRLMNEKTIEVKDLKFNPEQLAELIKLINAGTISNNIGKKVLDDMFKSGKNPKDIVEEKGLVQNNDEGAILEVVKNIIENNPQSIEDFKNGKKRALGFLVGLVMKETKGKANPQIVNKLVSEEANKM.

This sequence belongs to the GatB/GatE family. GatB subfamily. In terms of assembly, heterotrimer of A, B and C subunits.

The catalysed reaction is L-glutamyl-tRNA(Gln) + L-glutamine + ATP + H2O = L-glutaminyl-tRNA(Gln) + L-glutamate + ADP + phosphate + H(+). It carries out the reaction L-aspartyl-tRNA(Asn) + L-glutamine + ATP + H2O = L-asparaginyl-tRNA(Asn) + L-glutamate + ADP + phosphate + 2 H(+). Allows the formation of correctly charged Asn-tRNA(Asn) or Gln-tRNA(Gln) through the transamidation of misacylated Asp-tRNA(Asn) or Glu-tRNA(Gln) in organisms which lack either or both of asparaginyl-tRNA or glutaminyl-tRNA synthetases. The reaction takes place in the presence of glutamine and ATP through an activated phospho-Asp-tRNA(Asn) or phospho-Glu-tRNA(Gln). This chain is Aspartyl/glutamyl-tRNA(Asn/Gln) amidotransferase subunit B, found in Clostridium botulinum (strain Okra / Type B1).